The sequence spans 457 residues: UDP-glycosyltransferase 74C1 (457 aa).

Residues Thr281, Val336–Gln338, His353–Glu361, and Trp375–Gln378 each bind UDP-alpha-D-glucose.

The protein belongs to the UDP-glycosyltransferase family.

The sequence is that of UDP-glycosyltransferase 74C1 (UGT74C1) from Arabidopsis thaliana (Mouse-ear cress).